The following is a 521-amino-acid chain: MNLDLLLILTAVIMLIVGFAVGAILQKKAHEREIDGANKTAKGIIELAEKEAATRKKEILLEAKDENHQYRSEIENELKDRRGEVQKQENRLIQREETMDRKDATLDKKERTLEEHESRLAEQAQQLKEKQAEVETLVEQQRTKLQEIAELSHDDAQKIILDETKRNLDHERAVLIKESEESAKEHADRTAKTLVAEAIQRSAADMVAETTVTVVTLPNDDMKGRIIGREGRNIRTLETLTGIDLIIDDTPEAVVLSGFDPIRREIARMTLEKLIQDGRIHPARIEEMVDKSRKEMDEQIRQIGEQAIFDVGIHTMHPDLIKILGRLHFRTSYGQNVLNHSIEVAKLTGILAAELGEDVTLAKRAGLLHDIGKALDHEVDGSHVEIGVELATRYKEPATVINAIGSHHGDIEATSIISVLVAASDAISAARPGARSESLENYIHRLEKLESITNSFKGVDHSFAIQAGREVRVIVKPEQVTDDQATVLARDVKNQIEDQLEYPGHIKVTVIRETRTVEYAK.

A helical membrane pass occupies residues 5 to 25 (LLLILTAVIMLIVGFAVGAIL). The segment at 77–107 (ELKDRRGEVQKQENRLIQREETMDRKDATLD) is disordered. One can recognise a KH domain in the interval 211 to 271 (TVTVVTLPND…IRREIARMTL (61 aa)). Residues 337–430 (VLNHSIEVAK…VAASDAISAA (94 aa)) enclose the HD domain.

The protein belongs to the RNase Y family.

The protein resides in the cell membrane. Functionally, endoribonuclease that initiates mRNA decay. The sequence is that of Ribonuclease Y from Latilactobacillus sakei subsp. sakei (strain 23K) (Lactobacillus sakei subsp. sakei).